The primary structure comprises 125 residues: Aspercryptin biosynthesis cluster protein K (125 aa).

A disordered region spans residues 104–125 (QRAESVAGDSRPREHRQGAVGY). Residues 113–125 (SRPREHRQGAVGY) are compositionally biased toward basic and acidic residues.

It functions in the pathway secondary metabolite biosynthesis. Functionally, part of the gene cluster that mediates the biosynthesis of aspercryptins, linear lipopeptides built from six amino acids including 2 highly unusual and nonproteogenic amino acids, 2-amino-octanoic acid (2aoa) and 2-amino-dodecanol (2adol). The core structure of aspercryptins is as follows: Ser/Ala-Thr-Ile/Val-2aoa-Asn-2adol. The first step of aspercryptin biosynthesis is the generation of the fatty acid precursors, octanoic and dodecanoic acids, by the FAS subunits atnF and atnM. The fatty acid precursors are likely transformed into the corresponding alpha-amino fatty acids in three steps. First, they are hydroxylated by the cytochrome P450 monooxygenase atnE, then oxidized to the corresponding alpha-keto acids by the NAD(P)-dependent oxidoreductase atnD, and finally converted to the alpha-amino fatty acids by the PLP-dependent aminotransferases atnH or atnJ. the alpha-amino fatty acids, 2-amino-octanoic and 2-amino-dodecanoic acids, are recognized, activated, and covalently tethered to the NRPS atnA by its fourth and sixth adenylation domains. The second module of atnA is the Thr module and contains an epimerase (E) domain responsible for the epimerization of Thr to D-allo-Thr. Additionally, despite atnA having only one epimerase domain, the first amino acid of aspercryptin A1 is D-Ser, suggesting that serine is either loaded directly as D-Ser on the first module or that the epimerase domain in the threonine module epimerizes both L-Ser and L-Thr. After condensation of the hexapeptide of aspercryptin, the C-terminal reductase (TE) domain might be involved in the reductive release and production of the aldehyde hexapeptide. Further reduction would generate aspercryptins. The variety of aspercryptins produced reflects the flexibility of the atnA NRPS, allowing incorporation of alanine instead of serine, valine for isoleucine, and a C10 fatty amino alcohol instead of the C12 version. AtnB seems to be involved in the selectivity for Ile versus Val by the third module. Moreover, type B, C and D aspercryptins have an additional N-terminal cichorine, acetyl and propionyl group respectively. The chain is Aspercryptin biosynthesis cluster protein K from Emericella nidulans (strain FGSC A4 / ATCC 38163 / CBS 112.46 / NRRL 194 / M139) (Aspergillus nidulans).